Consider the following 350-residue polypeptide: MIDRLIVAPPEFQIYRDEHGNRLPRPFGLPICLLFTYLCNTSAGYDLFRKPAFNTAMKTLLDSWGLYLTTKDSAKLLTDCEGGWFSEEALQEFESDSRGKFEETYVCPDPDAVNRGFSSWDAFFTREVQPNARPVEAPDDKSVIHNPCESYLHCIARDVKCHDLFWLKGNIYSLYDMLNRDHKLAKQFVGGTIYQGFLSPVDYHRWRSPVDGTIKKTEIVAGTYYAALPDAGAPEGNQYQAAGDLRGALKRSQTWLAMVAARALVYIEADNPDIGLVCFIAVGMVEVSTCEVTVKRGQKVSAGSELGMFHFGGSSFVLVFGPQACITFPEDVVLGKHVKLNSILARVHKA.

Belongs to the phosphatidylserine decarboxylase family.

It functions in the pathway secondary metabolite biosynthesis. Its function is as follows. Decarboxylase; part of the gene cluster that mediates the biosynthesis of the psychoactive metabolites ibotenic acid and muscimol. The first committed step is glutamate hydroxylation by the 2-oxoglutarate-dependent dioxygenase iboH, and the last step is decarboxylation of ibotenic acid to muscimol by the decarboxylase iboD. The order of the intermediate reactions is somewhat ambiguous. IboA likely activates the carboxylic acid at position 5 to introduce an amide bond, and the flavin monooxygenase iboF generates the N-O bond. There are several options for the latter step. One option is that iboF directly hydroxylates the amide nitrogen formed by iboA to produce a hydroxamic acid species. Another option is that iboF hydroxylates an external N-containing compound, whose resulting N-O bond is subsequently introduced into the hydroxyglutamate scaffold. The paralogous PLP-dependent cystathionine gamma-synthase-like enzymes iboG1 and iboG2 are likely involved in substitution of the OH group at position 3 by the O-N moiety. The first cyclic intermediate is most probably tricholomic acid which is likely desaturated to ibotenic acid by the cytochrome P450 monooxygenase iboC. This is Decarboxylase iboD from Amanita muscaria (strain Koide BX008).